A 194-amino-acid chain; its full sequence is Imidazoleglycerol-phosphate dehydratase (194 aa).

Belongs to the imidazoleglycerol-phosphate dehydratase family.

It is found in the cytoplasm. The enzyme catalyses D-erythro-1-(imidazol-4-yl)glycerol 3-phosphate = 3-(imidazol-4-yl)-2-oxopropyl phosphate + H2O. Its pathway is amino-acid biosynthesis; L-histidine biosynthesis; L-histidine from 5-phospho-alpha-D-ribose 1-diphosphate: step 6/9. This Bacillus cereus (strain AH187) protein is Imidazoleglycerol-phosphate dehydratase.